The sequence spans 149 residues: Putative pre-16S rRNA nuclease (149 aa).

Belongs to the YqgF nuclease family.

It localises to the cytoplasm. Functionally, could be a nuclease involved in processing of the 5'-end of pre-16S rRNA. In Pseudoalteromonas translucida (strain TAC 125), this protein is Putative pre-16S rRNA nuclease.